The primary structure comprises 285 residues: Secreted LysM effector slp2 (285 aa).

Positions 1–16 are cleaved as a signal peptide; it reads MLPITVVTLFAALAAA. Residues 75–143 form a disordered region; the sequence is GDAAKAGDAA…KGGDAAKGGN (69 aa). The segment covering 85-116 has biased composition (basic and acidic residues); sequence KGGDAKGGDAKGGDAKGGDAKGGKGGDAKGGK. A compositionally biased stretch (gly residues) spans 117-139; sequence GGDAAKGGKGGDAAKGGKGGDAA. LysM domains lie at 157–201 and 237–281; these read VEHK…VLKI and FTRV…TINL.

Belongs to the secreted LysM effector family.

Might have a role in sequestration of chitin oligosaccharides (breakdown products of fungal cell walls that are released during invasion and act as triggers of host immunity) to dampen host defense. The protein is Secreted LysM effector slp2 of Pyricularia oryzae (strain 70-15 / ATCC MYA-4617 / FGSC 8958) (Rice blast fungus).